The sequence spans 455 residues: Tumor necrosis factor receptor superfamily member 1A (455 aa).

An N-terminal signal peptide occupies residues 1-29 (MGLSTVPDLLLPLVLLELLVGIYPSGVIG). Over 30-211 (LVPHLGDREK…VKGTEDSGTT (182 aa)) the chain is Extracellular. TNFR-Cys repeat units lie at residues 43-82 (VCPQ…TDCR), 83-125 (ECES…DTVC), 126-166 (GCRK…NTVC), and 167-196 (TCHA…KLCL). Cystine bridges form between Cys-44–Cys-58, Cys-59–Cys-72, Cys-62–Cys-81, Cys-84–Cys-99, Cys-102–Cys-117, Cys-105–Cys-125, and Cys-127–Cys-143. Residue Asn-54 is glycosylated (N-linked (GlcNAc...) asparagine). N-linked (GlcNAc...) asparagine glycosylation is found at Asn-145 and Asn-151. 5 disulfide bridges follow: Cys-146–Cys-158, Cys-149–Cys-166, Cys-168–Cys-179, Cys-182–Cys-195, and Cys-185–Cys-191. The chain crosses the membrane as a helical span at residues 212–232 (VLLPLVIFFGLCLLSLLFIGL). At 233–455 (MYRYQRWKSK…ALPPAPSLLR (223 aa)) the chain is on the cytoplasmic side. The tract at residues 254–273 (EKEGELEGTTTKPLAPNPSF) is disordered. Residues 338-348 (LQKWEDSAHKP) form an N-SMase activation domain (NSD) region. The Death domain occupies 356-441 (PATLYAVVEN…GCLEDIEEAL (86 aa)). Residue Arg-376 is glycosylated ((Microbial infection) N-beta-linked (GlcNAc) arginine).

Binding of TNF to the extracellular domain leads to homotrimerization. The aggregated death domains provide a novel molecular interface that interacts specifically with the death domain of TRADD. Various TRADD-interacting proteins such as TRAFS, RIPK1 and possibly FADD, are recruited to the complex by their association with TRADD. This complex activates at least two distinct signaling cascades, apoptosis and NF-kappa-B signaling. Interacts with BAG4, BABAM2, FEM1B, GRB2, SQSTM1 and TRPC4AP. Interacts directly with NOL3 (via CARD domain); inhibits TNF-signaling pathway. Interacts with SH3RF2, TRADD and RIPK1. SH3RF2 facilitates the recruitment of RIPK1 and TRADD to TNFRSF1A in a TNF-alpha-dependent process. Interacts with PGLYRP1; this interaction is important for cell death induction. Interacts (via death domain) with MADD (via death domain). As to quaternary structure, (Microbial infection) Interacts with mumps virus protein SH; this interaction inhibits downstream NF-kappa-B pathway activation. In terms of assembly, (Microbial infection) Interacts with HCV core protein. (Microbial infection) Interacts with human cytomegalovirus/HHV-5 protein UL138. As to quaternary structure, (Microbial infection) Interacts with host TNFRSF1A; this interaction leads to the stimulation of both surface expression and shedding of TNFRSF1A. The soluble form is produced from the membrane form by proteolytic processing. In terms of processing, (Microbial infection) Glycosylated at Arg-376 by enteropathogenic E.coli protein NleB1 and S.typhimurium protein Ssek3: arginine GlcNAcylation prevents homotypic/heterotypic death domain interactions.

It localises to the cell membrane. The protein localises to the golgi apparatus membrane. It is found in the secreted. Its function is as follows. Receptor for TNFSF2/TNF-alpha and homotrimeric TNFSF1/lymphotoxin-alpha. The adapter molecule FADD recruits caspase-8 to the activated receptor. The resulting death-inducing signaling complex (DISC) performs caspase-8 proteolytic activation which initiates the subsequent cascade of caspases (aspartate-specific cysteine proteases) mediating apoptosis. Contributes to the induction of non-cytocidal TNF effects including anti-viral state and activation of the acid sphingomyelinase. The polypeptide is Tumor necrosis factor receptor superfamily member 1A (TNFRSF1A) (Homo sapiens (Human)).